Reading from the N-terminus, the 355-residue chain is Probable low-specificity L-threonine aldolase 2 (355 aa).

Residue K211 is modified to N6-(pyridoxal phosphate)lysine.

It belongs to the threonine aldolase family. It depends on pyridoxal 5'-phosphate as a cofactor. Expressed in roots, leaf vasculature and flowers.

The catalysed reaction is L-threonine = acetaldehyde + glycine. It carries out the reaction L-allo-threonine = acetaldehyde + glycine. It functions in the pathway amino-acid degradation; L-threonine degradation via aldolase pathway; acetaldehyde and glycine from L-threonine: step 1/1. Functionally, threonine aldolase involved in threonine degradation to glycine. May play a role in the removal of L-allo-threonine. This is Probable low-specificity L-threonine aldolase 2 (THA2) from Arabidopsis thaliana (Mouse-ear cress).